A 139-amino-acid chain; its full sequence is Large ribosomal subunit protein bL17 (139 aa).

A disordered region spans residues 120-139 (EDAKGRDSGPTQDNSEAEAA).

As to quaternary structure, part of the 50S ribosomal subunit. Contacts protein L32. Post-translationally, may be methylated thrice, on undetermined residues.

This chain is Large ribosomal subunit protein bL17, found in Rhodopseudomonas palustris (strain ATCC BAA-98 / CGA009).